The following is a 235-amino-acid chain: Large ribosomal subunit protein uL1 (235 aa).

This sequence belongs to the universal ribosomal protein uL1 family. In terms of assembly, part of the 50S ribosomal subunit.

In terms of biological role, binds directly to 23S rRNA. The L1 stalk is quite mobile in the ribosome, and is involved in E site tRNA release. Its function is as follows. Protein L1 is also a translational repressor protein, it controls the translation of the L11 operon by binding to its mRNA. In Mycobacterium sp. (strain JLS), this protein is Large ribosomal subunit protein uL1.